The following is a 158-amino-acid chain: Ribosome maturation factor RimP (158 aa).

This sequence belongs to the RimP family.

It localises to the cytoplasm. In terms of biological role, required for maturation of 30S ribosomal subunits. This chain is Ribosome maturation factor RimP, found in Aquifex aeolicus (strain VF5).